A 238-amino-acid polypeptide reads, in one-letter code: Uridylate kinase (238 aa).

Residue 12 to 15 (KLSG) participates in ATP binding. Residues 20–25 (GEKGFG) are involved in allosteric activation by GTP. Gly54 serves as a coordination point for UMP. Residues Gly55 and Arg59 each coordinate ATP. Residues Asp74 and 135–142 (TGSPYFST) each bind UMP. 3 residues coordinate ATP: Asn163, Tyr169, and Asp172.

Belongs to the UMP kinase family. As to quaternary structure, homohexamer.

Its subcellular location is the cytoplasm. It carries out the reaction UMP + ATP = UDP + ADP. Its pathway is pyrimidine metabolism; CTP biosynthesis via de novo pathway; UDP from UMP (UMPK route): step 1/1. Allosterically activated by GTP. Inhibited by UTP. Catalyzes the reversible phosphorylation of UMP to UDP. The protein is Uridylate kinase of Lactococcus lactis subsp. lactis (strain IL1403) (Streptococcus lactis).